The following is a 267-amino-acid chain: Hydroxyethylthiazole kinase (267 aa).

Met-46 contacts substrate. Positions 122 and 168 each coordinate ATP. Gly-195 lines the substrate pocket.

Belongs to the Thz kinase family. Mg(2+) is required as a cofactor.

The enzyme catalyses 5-(2-hydroxyethyl)-4-methylthiazole + ATP = 4-methyl-5-(2-phosphooxyethyl)-thiazole + ADP + H(+). Its pathway is cofactor biosynthesis; thiamine diphosphate biosynthesis; 4-methyl-5-(2-phosphoethyl)-thiazole from 5-(2-hydroxyethyl)-4-methylthiazole: step 1/1. Catalyzes the phosphorylation of the hydroxyl group of 4-methyl-5-beta-hydroxyethylthiazole (THZ). The protein is Hydroxyethylthiazole kinase of Nitratidesulfovibrio vulgaris (strain DP4) (Desulfovibrio vulgaris).